A 394-amino-acid chain; its full sequence is Purine ribonucleoside efflux pump NepI (394 aa).

The Cytoplasmic segment spans residues 1-21 (MSEFIAENRGADAITRPNWSA). Residues 22-42 (VFSVAFCVACLIIVEFLPVSL) form a helical membrane-spanning segment. Residues 43-54 (LTPMAQDLGISE) are Periplasmic-facing. Residues 55 to 75 (GVAGQSVTVTAFVAMFASLFI) form a helical membrane-spanning segment. At 76-85 (TQTIQATDRR) the chain is on the cytoplasmic side. A helical transmembrane segment spans residues 86 to 106 (YVVILFAVLLTISCLLVSFAN). A topological domain (periplasmic) is located at residue Ser-107. The chain crosses the membrane as a helical span at residues 108 to 128 (FSLLLIGRACLGLALGGFWAM). Topologically, residues 129–147 (SASLTMRLVPPRTVPKALS) are cytoplasmic. A helical membrane pass occupies residues 148 to 168 (VIFGAVSIALVIAAPLGSFLG). At 169–175 (ELIGWRN) the chain is on the periplasmic side. Residues 176–196 (VFNAAAVMGVLCIFWIIKSLP) traverse the membrane as a helical segment. Over 197–215 (SLPGKPSHQKQNTFRLLQR) the chain is Cytoplasmic. The helical transmembrane segment at 216–236 (PGVMAGMIAIFMSFAGQFAFF) threads the bilayer. Over 237–255 (TYIRPVYMNLAGFGVDGLT) the chain is Periplasmic. Residues 256–276 (LVLLSFGIASFIGTSLSSFIL) traverse the membrane as a helical segment. The Cytoplasmic segment spans residues 277 to 281 (KRSVK). A helical transmembrane segment spans residues 282-302 (LALAGAPLILAVSALVLTLCG). Over 303–305 (SDK) the chain is Periplasmic. A helical transmembrane segment spans residues 306–326 (IVATGVAIIWGLTFALVPVGW). Residues 327–343 (STWSTRSLADQAEKAGS) lie on the Cytoplasmic side of the membrane. Residues 344–364 (IQVAVIQLANTCGAAIGGYAL) traverse the membrane as a helical segment. At 365–366 (DN) the chain is on the periplasmic side. Residues 367–387 (IGLTSPLMLSGTLMLLTALLV) traverse the membrane as a helical segment. At 388-394 (TAKVKMK) the chain is on the cytoplasmic side.

Belongs to the major facilitator superfamily. DHA1 family. NepI (TC 2.A.1.2.26) subfamily.

It is found in the cell inner membrane. The enzyme catalyses inosine(in) + H(+)(out) = inosine(out) + H(+)(in). It catalyses the reaction guanosine(in) + H(+)(out) = guanosine(out) + H(+)(in). Involved in the efflux of purine ribonucleosides, such as inosine and guanosine. The chain is Purine ribonucleoside efflux pump NepI from Shigella dysenteriae serotype 1 (strain Sd197).